The sequence spans 164 residues: 5-formyltetrahydrofolate cyclo-ligase (164 aa).

3–7 (KNALR) lines the ATP pocket. Substrate-binding residues include Glu-50 and Glu-55. 115–123 (RLGFGKGYY) contributes to the ATP binding site. Asp-124 contacts Mg(2+). Residues Arg-125 and Trp-153 each contribute to the ATP site. Mg(2+) is bound at residue Asp-154.

This sequence belongs to the 5-formyltetrahydrofolate cyclo-ligase family. Monomer or homodimer. Requires Mg(2+) as cofactor. It depends on Mn(2+) as a cofactor. Ca(2+) serves as cofactor. The cofactor is Zn(2+). Fe(2+) is required as a cofactor. Requires Co(2+) as cofactor. It depends on Cu(2+) as a cofactor.

The protein resides in the cytoplasm. The enzyme catalyses (6S)-5-formyl-5,6,7,8-tetrahydrofolate + ATP = (6R)-5,10-methenyltetrahydrofolate + ADP + phosphate. Functionally, involved in folate metabolism. Catalyzes the irreversible conversion of 5-formyltetrahydrofolate (5-FTHF) to yield 5,10-methenyltetrahydrofolate. This is 5-formyltetrahydrofolate cyclo-ligase from Mycoplasma pneumoniae (strain ATCC 29342 / M129 / Subtype 1) (Mycoplasmoides pneumoniae).